Here is a 179-residue protein sequence, read N- to C-terminus: ATP synthase subunit delta (179 aa).

The protein belongs to the ATPase delta chain family. In terms of assembly, F-type ATPases have 2 components, F(1) - the catalytic core - and F(0) - the membrane proton channel. F(1) has five subunits: alpha(3), beta(3), gamma(1), delta(1), epsilon(1). F(0) has three main subunits: a(1), b(2) and c(10-14). The alpha and beta chains form an alternating ring which encloses part of the gamma chain. F(1) is attached to F(0) by a central stalk formed by the gamma and epsilon chains, while a peripheral stalk is formed by the delta and b chains.

Its subcellular location is the cell membrane. In terms of biological role, f(1)F(0) ATP synthase produces ATP from ADP in the presence of a proton or sodium gradient. F-type ATPases consist of two structural domains, F(1) containing the extramembraneous catalytic core and F(0) containing the membrane proton channel, linked together by a central stalk and a peripheral stalk. During catalysis, ATP synthesis in the catalytic domain of F(1) is coupled via a rotary mechanism of the central stalk subunits to proton translocation. Functionally, this protein is part of the stalk that links CF(0) to CF(1). It either transmits conformational changes from CF(0) to CF(1) or is implicated in proton conduction. In Clostridium beijerinckii (strain ATCC 51743 / NCIMB 8052) (Clostridium acetobutylicum), this protein is ATP synthase subunit delta.